A 436-amino-acid chain; its full sequence is UPF0761 membrane protein Bxeno_A3061 (436 aa).

The next 6 helical transmembrane spans lie at 42–62 (LVPL…FASF), 96–116 (GLTT…MMTV), 136–156 (ILVY…SLSI), 180–200 (ALAG…YVYL), 210–230 (AVIG…GFGY), and 241–261 (VYGA…CWFI).

It belongs to the UPF0761 family.

It localises to the cell inner membrane. In Paraburkholderia xenovorans (strain LB400), this protein is UPF0761 membrane protein Bxeno_A3061.